The sequence spans 142 residues: MAPGRRVERVAALIRRETSELLIHGIRDERVHQGMVSITNVEVSGDLQHCKIFVSIYGEEIQRSEVLEGLEAASGFLRGELGRRLQMRRAPEVHFHLDRGIEKGTSVLNLLEQLEQQRETLGEVQSESDQPTTYETTTVNKT.

The disordered stretch occupies residues 120 to 142 (TLGEVQSESDQPTTYETTTVNKT). The span at 123-142 (EVQSESDQPTTYETTTVNKT) shows a compositional bias: polar residues.

It belongs to the RbfA family. As to quaternary structure, monomer. Binds 30S ribosomal subunits, but not 50S ribosomal subunits or 70S ribosomes.

The protein localises to the cytoplasm. Its function is as follows. One of several proteins that assist in the late maturation steps of the functional core of the 30S ribosomal subunit. Associates with free 30S ribosomal subunits (but not with 30S subunits that are part of 70S ribosomes or polysomes). Required for efficient processing of 16S rRNA. May interact with the 5'-terminal helix region of 16S rRNA. The protein is Ribosome-binding factor A of Prochlorococcus marinus (strain MIT 9313).